Here is a 118-residue protein sequence, read N- to C-terminus: Large ribosomal subunit protein bL17 (118 aa).

This sequence belongs to the bacterial ribosomal protein bL17 family. As to quaternary structure, part of the 50S ribosomal subunit. Contacts protein L32.

The protein is Large ribosomal subunit protein bL17 of Phytoplasma australiense.